The chain runs to 705 residues: Glycine--tRNA ligase beta subunit (705 aa).

This sequence belongs to the class-II aminoacyl-tRNA synthetase family. As to quaternary structure, tetramer of two alpha and two beta subunits.

Its subcellular location is the cytoplasm. It catalyses the reaction tRNA(Gly) + glycine + ATP = glycyl-tRNA(Gly) + AMP + diphosphate. The chain is Glycine--tRNA ligase beta subunit from Persephonella marina (strain DSM 14350 / EX-H1).